A 464-amino-acid chain; its full sequence is Argininosuccinate lyase (464 aa).

This sequence belongs to the lyase 1 family. Argininosuccinate lyase subfamily.

Its subcellular location is the cytoplasm. It catalyses the reaction 2-(N(omega)-L-arginino)succinate = fumarate + L-arginine. The protein operates within amino-acid biosynthesis; L-arginine biosynthesis; L-arginine from L-ornithine and carbamoyl phosphate: step 3/3. The protein is Argininosuccinate lyase of Pseudomonas entomophila (strain L48).